The primary structure comprises 684 residues: Cleavage and polyadenylation specificity factor subunit 3 (684 aa).

Residue Ser-2 is modified to N-acetylserine. Zn(2+) contacts are provided by His-71, His-73, Asp-75, His-76, His-158, and Asp-179. The Proton donor role is filled by His-396. A Zn(2+)-binding site is contributed by His-418. Residues Lys-462, Lys-465, and Lys-545 each participate in a glycyl lysine isopeptide (Lys-Gly) (interchain with G-Cter in SUMO) cross-link. At Ser-659 the chain carries Phosphoserine. Residue Thr-681 is modified to Phosphothreonine.

The protein belongs to the metallo-beta-lactamase superfamily. RNA-metabolizing metallo-beta-lactamase-like family. CPSF3 subfamily. As to quaternary structure, component of the cleavage and polyadenylation specificity factor (CPSF) complex, composed of CPSF1, CPSF2, CPSF3, CPSF4 and FIP1L1. Interacts with CPSF2, CSTF2 and SYMPK. Interacts with TUT1; the interaction is direct and mediates the recruitment of the CPSF complex on the 3'UTR of pre-mRNAs. Interacts with WDR33. Interacts with ZC3H3. Zn(2+) serves as cofactor. Sumoylated on Lys-462, Lys-465 and Lys-545, preferentially by SUMO3.

It is found in the nucleus. In terms of biological role, component of the cleavage and polyadenylation specificity factor (CPSF) complex that plays a key role in pre-mRNA 3'-end formation, recognizing the AAUAAA signal sequence and interacting with poly(A) polymerase and other factors to bring about cleavage and poly(A) addition. Has endonuclease activity, and functions as an mRNA 3'-end-processing endonuclease. Also involved in the histone 3'-end pre-mRNA processing. U7 snRNP-dependent protein that induces both the 3'-endoribonucleolytic cleavage of histone pre-mRNAs and acts as a 5' to 3' exonuclease for degrading the subsequent downstream cleavage product (DCP) of mature histone mRNAs. Cleavage occurs after the 5'-ACCCA-3' sequence in the histone pre-mRNA leaving a 3'hydroxyl group on the upstream fragment containing the stem loop (SL) and 5' phosphate on the downstream cleavage product (DCP) starting with CU nucleotides. The U7-dependent 5' to 3' exonuclease activity is processive and degrades the DCP RNA substrate even after complete removal of the U7-binding site. Binds to the downstream cleavage product (DCP) of histone pre-mRNAs and the cleaved DCP RNA substrate in a U7 snRNP dependent manner. Required for entering/progressing through S-phase of the cell cycle. Required for the selective processing of microRNAs (miRNAs) during embryonic stem cell differentiation via its interaction with ISY1. Required for the biogenesis of all miRNAs from the pri-miR-17-92 primary transcript except miR-92a. Only required for the biogenesis of miR-290 and miR-96 from the pri-miR-290-295 and pri-miR-96-183 primary transcripts, respectively. This chain is Cleavage and polyadenylation specificity factor subunit 3 (CPSF3), found in Homo sapiens (Human).